A 95-amino-acid chain; its full sequence is Acylphosphatase (95 aa).

Positions 5-93 constitute an Acylphosphatase-like domain; it reads RAHLFIRGKV…GEFQDFRILP (89 aa). Catalysis depends on residues arginine 20 and asparagine 38.

This sequence belongs to the acylphosphatase family.

It carries out the reaction an acyl phosphate + H2O = a carboxylate + phosphate + H(+). The polypeptide is Acylphosphatase (acyP) (Pyrobaculum arsenaticum (strain DSM 13514 / JCM 11321 / PZ6)).